We begin with the raw amino-acid sequence, 123 residues long: Defensin beta 118 (123 aa).

The N-terminal stretch at 1 to 19 is a signal peptide; the sequence is MKLLLLALPMLVLLPQVIP. Intrachain disulfides connect C27–C54, C34–C48, and C38–C55. Residues 65–123 constitute a propeptide that is removed on maturation; that stretch reads VPTTSPTPLSDSTPGIIDDILTVRFTTDYFEVSSKKDMIEESEAGRGTETSLPNVHHSS. Positions 100-110 are enriched in basic and acidic residues; it reads KDMIEESEAGR. The tract at residues 100–123 is disordered; the sequence is KDMIEESEAGRGTETSLPNVHHSS. The segment covering 112 to 123 has biased composition (polar residues); that stretch reads TETSLPNVHHSS.

This sequence belongs to the beta-defensin family. The three-dimensional structure formed by the three intramolecular disulfide bridges is indispensable for antimicrobial activity.

It is found in the secreted. Host defense peptide that exhibits antimicrobial activity against both Gram-negative bacteria, such as E.coli and S.typhimurium, and Gram-positive bacteria, such as S.aureus and B.subtilis. Inhibits cell adhesion of E.coli on intestinal epithelial enterocytes. Causes rapid permeabilization of both the outer and inner membrane of E.coli, leading to morphological alterations on the bacterial surface. Binds to bacterial lipopolysaccharides (LPS) with high affinity, and may thereby be involved in immunoregulation through LPS neutralization. May contribute to epididymal innate immunity and protect the sperm against attack by microorganisms. In Gorilla gorilla gorilla (Western lowland gorilla), this protein is Defensin beta 118 (DEFB118).